Reading from the N-terminus, the 390-residue chain is Tuftelin (390 aa).

2 coiled-coil regions span residues 88-126 and 162-351; these read DKMI…KLDR and DTHI…IEKQ. Phosphoserine is present on S171.

It belongs to the tuftelin family. In terms of assembly, interacts with TFIP11. Present in the extracellular enamel and is mainly associated with the crystal component.

It is found in the secreted. Its function is as follows. Involved in the structural organization of the epidermis. Involved in the mineralization and structural organization of enamel. The protein is Tuftelin (TUFT1) of Bos taurus (Bovine).